The primary structure comprises 172 residues: Large ribosomal subunit protein uL10 (172 aa).

Belongs to the universal ribosomal protein uL10 family. Part of the ribosomal stalk of the 50S ribosomal subunit. The N-terminus interacts with L11 and the large rRNA to form the base of the stalk. The C-terminus forms an elongated spine to which L12 dimers bind in a sequential fashion forming a multimeric L10(L12)X complex.

In terms of biological role, forms part of the ribosomal stalk, playing a central role in the interaction of the ribosome with GTP-bound translation factors. In Nitrobacter hamburgensis (strain DSM 10229 / NCIMB 13809 / X14), this protein is Large ribosomal subunit protein uL10.